The chain runs to 695 residues: UvrABC system protein B (695 aa).

Residues 25-176 (KSILEGHRFQ…NQREVLRDLA (152 aa)) form the Helicase ATP-binding domain. 38-45 (GATGTGKT) provides a ligand contact to ATP. The short motif at 91-114 (YYDYYQPEAYVPSTDTYIAKSSSI) is the Beta-hairpin element. Residues 454 to 617 (LLGEIYLRLE…ITPKPIIKKN (164 aa)) enclose the Helicase C-terminal domain. The region spanning 652–687 (PELIGQLELKMKAAAKNLEFEEAAQLRDQIKKLRQR) is the UVR domain.

Belongs to the UvrB family. In terms of assembly, forms a heterotetramer with UvrA during the search for lesions. Interacts with UvrC in an incision complex.

The protein localises to the cytoplasm. In terms of biological role, the UvrABC repair system catalyzes the recognition and processing of DNA lesions. A damage recognition complex composed of 2 UvrA and 2 UvrB subunits scans DNA for abnormalities. Upon binding of the UvrA(2)B(2) complex to a putative damaged site, the DNA wraps around one UvrB monomer. DNA wrap is dependent on ATP binding by UvrB and probably causes local melting of the DNA helix, facilitating insertion of UvrB beta-hairpin between the DNA strands. Then UvrB probes one DNA strand for the presence of a lesion. If a lesion is found the UvrA subunits dissociate and the UvrB-DNA preincision complex is formed. This complex is subsequently bound by UvrC and the second UvrB is released. If no lesion is found, the DNA wraps around the other UvrB subunit that will check the other stand for damage. The protein is UvrABC system protein B of Synechococcus sp. (strain JA-3-3Ab) (Cyanobacteria bacterium Yellowstone A-Prime).